We begin with the raw amino-acid sequence, 117 residues long: Large ribosomal subunit protein bL20 (117 aa).

Belongs to the bacterial ribosomal protein bL20 family.

Its function is as follows. Binds directly to 23S ribosomal RNA and is necessary for the in vitro assembly process of the 50S ribosomal subunit. It is not involved in the protein synthesizing functions of that subunit. This chain is Large ribosomal subunit protein bL20, found in Rickettsia rickettsii (strain Iowa).